The primary structure comprises 184 residues: Probable gluconokinase (184 aa).

An ATP-binding site is contributed by 11–18 (GVSGSGKS).

Belongs to the gluconokinase GntK/GntV family.

It carries out the reaction D-gluconate + ATP = 6-phospho-D-gluconate + ADP + H(+). The protein operates within carbohydrate acid metabolism; D-gluconate degradation. The protein is Probable gluconokinase (Idnk) of Mus musculus (Mouse).